A 358-amino-acid chain; its full sequence is MKSIVIVAGGTGGHISPGVALAEVLTELKEKIGYENLYLYSLVRNKNNPDLEQAPCPVLWHNLPPLSSNFFLFPIRYTIQIIKTFFIFKKLNIDVVIGMGGYSTVSSILYGIFFRKKIYLCEQNTIPGNVNRLFFRFASKVAFSLPPKNSKIPCDYQVLGNPLRKKTIPKMSLKFFEKYDTKKKKQFNVLVMGGSQGARQINNIVIALMSHEEINKQFRFRVLTGSALYEEVSKKSKKDAELISYSDNMKEHYEWANFVIARSGSGVLSECAAFALPMILIPYPYAKDDHQMANAKYFELNGAAIVVDQKDEDESHLFRVLDQMANDVNLLNDMSISSLECSHVDASKDTAKYFFSLD.

UDP-N-acetyl-alpha-D-glucosamine is bound by residues 11–13, asparagine 124, arginine 164, serine 195, and glutamine 291; that span reads TGG.

Belongs to the glycosyltransferase 28 family. MurG subfamily.

It localises to the cell inner membrane. The enzyme catalyses di-trans,octa-cis-undecaprenyl diphospho-N-acetyl-alpha-D-muramoyl-L-alanyl-D-glutamyl-meso-2,6-diaminopimeloyl-D-alanyl-D-alanine + UDP-N-acetyl-alpha-D-glucosamine = di-trans,octa-cis-undecaprenyl diphospho-[N-acetyl-alpha-D-glucosaminyl-(1-&gt;4)]-N-acetyl-alpha-D-muramoyl-L-alanyl-D-glutamyl-meso-2,6-diaminopimeloyl-D-alanyl-D-alanine + UDP + H(+). It functions in the pathway cell wall biogenesis; peptidoglycan biosynthesis. Its function is as follows. Cell wall formation. Catalyzes the transfer of a GlcNAc subunit on undecaprenyl-pyrophosphoryl-MurNAc-pentapeptide (lipid intermediate I) to form undecaprenyl-pyrophosphoryl-MurNAc-(pentapeptide)GlcNAc (lipid intermediate II). The protein is UDP-N-acetylglucosamine--N-acetylmuramyl-(pentapeptide) pyrophosphoryl-undecaprenol N-acetylglucosamine transferase of Leptospira interrogans serogroup Icterohaemorrhagiae serovar copenhageni (strain Fiocruz L1-130).